Consider the following 671-residue polypeptide: DNA ligase (671 aa).

Residues 32–36, 81–82, and glutamate 113 contribute to the NAD(+) site; these read DAEYD and SL. The active-site N6-AMP-lysine intermediate is the lysine 115. Positions 136, 173, 290, and 314 each coordinate NAD(+). The Zn(2+) site is built by cysteine 408, cysteine 411, cysteine 426, and cysteine 432. A BRCT domain is found at 593 to 671; that stretch reads EIDSPFAGKT…EAEMIRLLGA (79 aa).

This sequence belongs to the NAD-dependent DNA ligase family. LigA subfamily. It depends on Mg(2+) as a cofactor. Mn(2+) serves as cofactor.

It catalyses the reaction NAD(+) + (deoxyribonucleotide)n-3'-hydroxyl + 5'-phospho-(deoxyribonucleotide)m = (deoxyribonucleotide)n+m + AMP + beta-nicotinamide D-nucleotide.. In terms of biological role, DNA ligase that catalyzes the formation of phosphodiester linkages between 5'-phosphoryl and 3'-hydroxyl groups in double-stranded DNA using NAD as a coenzyme and as the energy source for the reaction. It is essential for DNA replication and repair of damaged DNA. The protein is DNA ligase of Salmonella typhi.